Reading from the N-terminus, the 189-residue chain is UPF0301 protein RC0043 (189 aa).

It belongs to the UPF0301 (AlgH) family.

This is UPF0301 protein RC0043 from Rickettsia conorii (strain ATCC VR-613 / Malish 7).